Reading from the N-terminus, the 356-residue chain is ATP-dependent 6-phosphofructokinase (356 aa).

Residues glycine 15, 78–79 (KG), and 115–118 (GEGT) each bind ATP. Mg(2+) is bound at residue glutamate 116. Residues 138–140 (TID), arginine 175, 182–184 (MGR), glutamate 235, arginine 272, and 278–281 (HLQR) contribute to the substrate site. The active-site Proton acceptor is aspartate 140.

It belongs to the phosphofructokinase type A (PFKA) family. Mixed-substrate PFK group III subfamily. In terms of assembly, homodimer or homotetramer. It depends on Mg(2+) as a cofactor.

The protein localises to the cytoplasm. It carries out the reaction beta-D-fructose 6-phosphate + ATP = beta-D-fructose 1,6-bisphosphate + ADP + H(+). The protein operates within carbohydrate degradation; glycolysis; D-glyceraldehyde 3-phosphate and glycerone phosphate from D-glucose: step 3/4. Catalyzes the phosphorylation of D-fructose 6-phosphate to fructose 1,6-bisphosphate by ATP, the first committing step of glycolysis. In Chloroflexus aggregans (strain MD-66 / DSM 9485), this protein is ATP-dependent 6-phosphofructokinase.